The primary structure comprises 95 residues: Integration host factor subunit beta (95 aa).

The protein belongs to the bacterial histone-like protein family. In terms of assembly, heterodimer of an alpha and a beta chain.

In terms of biological role, this protein is one of the two subunits of integration host factor, a specific DNA-binding protein that functions in genetic recombination as well as in transcriptional and translational control. In Klebsiella pneumoniae subsp. pneumoniae (strain ATCC 700721 / MGH 78578), this protein is Integration host factor subunit beta.